The primary structure comprises 477 residues: Small ribosomal subunit protein uS5m (477 aa).

This sequence belongs to the universal ribosomal protein uS5 family. As to quaternary structure, component of the mitochondrial small ribosomal subunit (mt-SSU). Mature N.crassa 74S mitochondrial ribosomes consist of a small (37S) and a large (54S) subunit. The 37S small subunit contains a 16S ribosomal RNA (16S mt-rRNA) and 32 different proteins. The 54S large subunit contains a 23S rRNA (23S mt-rRNA) and 42 different proteins. uS3m, uS4m and uS5m form the narrow entry site of the mRNA channel.

The protein resides in the mitochondrion. Its function is as follows. Component of the mitochondrial ribosome (mitoribosome), a dedicated translation machinery responsible for the synthesis of mitochondrial genome-encoded proteins, including at least some of the essential transmembrane subunits of the mitochondrial respiratory chain. The mitoribosomes are attached to the mitochondrial inner membrane and translation products are cotranslationally integrated into the membrane. In Neurospora crassa (strain ATCC 24698 / 74-OR23-1A / CBS 708.71 / DSM 1257 / FGSC 987), this protein is Small ribosomal subunit protein uS5m (mrps5).